We begin with the raw amino-acid sequence, 190 residues long: Crossover junction endodeoxyribonuclease RuvC (190 aa).

Residues D8, E67, and D139 contribute to the active site. Residues D8, E67, and D139 each coordinate Mg(2+).

The protein belongs to the RuvC family. In terms of assembly, homodimer which binds Holliday junction (HJ) DNA. The HJ becomes 2-fold symmetrical on binding to RuvC with unstacked arms; it has a different conformation from HJ DNA in complex with RuvA. In the full resolvosome a probable DNA-RuvA(4)-RuvB(12)-RuvC(2) complex forms which resolves the HJ. The cofactor is Mg(2+).

The protein localises to the cytoplasm. It carries out the reaction Endonucleolytic cleavage at a junction such as a reciprocal single-stranded crossover between two homologous DNA duplexes (Holliday junction).. Its function is as follows. The RuvA-RuvB-RuvC complex processes Holliday junction (HJ) DNA during genetic recombination and DNA repair. Endonuclease that resolves HJ intermediates. Cleaves cruciform DNA by making single-stranded nicks across the HJ at symmetrical positions within the homologous arms, yielding a 5'-phosphate and a 3'-hydroxyl group; requires a central core of homology in the junction. The consensus cleavage sequence is 5'-(A/T)TT(C/G)-3'. Cleavage occurs on the 3'-side of the TT dinucleotide at the point of strand exchange. HJ branch migration catalyzed by RuvA-RuvB allows RuvC to scan DNA until it finds its consensus sequence, where it cleaves and resolves the cruciform DNA. The polypeptide is Crossover junction endodeoxyribonuclease RuvC (Haemophilus influenzae (strain 86-028NP)).